A 120-amino-acid polypeptide reads, in one-letter code: Cytochrome b5 (120 aa).

The 77-residue stretch at 2 to 78 (PKVYSYQEVA…LKGLYIGDVD (77 aa)) folds into the Cytochrome b5 heme-binding domain. Positions 37 and 61 each coordinate heme. The helical transmembrane segment at 98 to 118 (GSGTLVVILAILMLGVAYYLL) threads the bilayer.

This sequence belongs to the cytochrome b5 family.

It is found in the endoplasmic reticulum membrane. Its subcellular location is the microsome membrane. In terms of biological role, membrane bound hemoprotein which function as an electron carrier for several membrane bound oxygenases. It plays a role in fatty-acid desaturation and is also involved in several steps of the sterol biosynthesis pathway, particularly in the 4-demethylation of the 4,4'-dimethyl zymosterol. The protein is Cytochrome b5 (CYB5) of Saccharomyces cerevisiae (strain ATCC 204508 / S288c) (Baker's yeast).